The primary structure comprises 279 residues: Zinc-finger homeodomain protein 1 (279 aa).

Positions 1-13 are enriched in acidic residues; the sequence is MDFDDHDDGDEEM. The segment at 1-47 is disordered; the sequence is MDFDDHDDGDEEMPPMPVSSSYETPPQHGLAGGGMAPKPPGEIGSRV. The segment at 57-106 adopts a ZF-HD dimerization-type; degenerate zinc-finger fold; that stretch reads YRECLKNHAVGIGGHAVDGCGEFMAAGEEGTIDALRCAACNCHRNFHRKE. Residues 168–190 are disordered; sequence RPLALPSTSHSGRDDGDDLSGMV. Residues 215 to 278 constitute a DNA-binding region (homeobox); the sequence is KKRFRTKFTQ…NNKHTLGKKL (64 aa).

As to quaternary structure, homo- and heterodimer with other ZFHD proteins.

It is found in the nucleus. Its function is as follows. Putative transcription factor. This chain is Zinc-finger homeodomain protein 1 (ZHD1), found in Oryza sativa subsp. japonica (Rice).